A 134-amino-acid polypeptide reads, in one-letter code: Translation initiation factor 5A (134 aa).

Residue Lys36 is modified to Hypusine.

Belongs to the eIF-5A family.

The protein resides in the cytoplasm. In terms of biological role, functions by promoting the formation of the first peptide bond. This Korarchaeum cryptofilum (strain OPF8) protein is Translation initiation factor 5A (eIF5A).